Reading from the N-terminus, the 246-residue chain is 1-(5-phosphoribosyl)-5-[(5-phosphoribosylamino)methylideneamino] imidazole-4-carboxamide isomerase (246 aa).

Asp-7 serves as the catalytic Proton acceptor. Asp-129 serves as the catalytic Proton donor.

The protein belongs to the HisA/HisF family.

The protein localises to the cytoplasm. It carries out the reaction 1-(5-phospho-beta-D-ribosyl)-5-[(5-phospho-beta-D-ribosylamino)methylideneamino]imidazole-4-carboxamide = 5-[(5-phospho-1-deoxy-D-ribulos-1-ylimino)methylamino]-1-(5-phospho-beta-D-ribosyl)imidazole-4-carboxamide. Its pathway is amino-acid biosynthesis; L-histidine biosynthesis; L-histidine from 5-phospho-alpha-D-ribose 1-diphosphate: step 4/9. The sequence is that of 1-(5-phosphoribosyl)-5-[(5-phosphoribosylamino)methylideneamino] imidazole-4-carboxamide isomerase from Buchnera aphidicola subsp. Acyrthosiphon pisum (strain Tuc7).